The primary structure comprises 573 residues: Maestro heat-like repeat-containing protein family member 9 (573 aa).

HEAT repeat units lie at residues 118–155 (LYKL…FTVT), 252–289 (PLLT…FHAE), 292–328 (TMVS…TSPK), 357–394 (SVAP…ITNL), and 418–458 (QYFP…LLNC).

The chain is Maestro heat-like repeat-containing protein family member 9 (MROH9) from Homo sapiens (Human).